Reading from the N-terminus, the 148-residue chain is 3-dehydroquinate dehydratase (148 aa).

The active-site Proton acceptor is the Y23. 3 residues coordinate substrate: N75, H81, and D88. Catalysis depends on H101, which acts as the Proton donor. Substrate-binding positions include 102-103 (LS) and R112.

The protein belongs to the type-II 3-dehydroquinase family. As to quaternary structure, homododecamer.

It catalyses the reaction 3-dehydroquinate = 3-dehydroshikimate + H2O. It participates in metabolic intermediate biosynthesis; chorismate biosynthesis; chorismate from D-erythrose 4-phosphate and phosphoenolpyruvate: step 3/7. Functionally, catalyzes a trans-dehydration via an enolate intermediate. The polypeptide is 3-dehydroquinate dehydratase (Xanthomonas axonopodis pv. citri (strain 306)).